Here is a 411-residue protein sequence, read N- to C-terminus: Citrate synthase (411 aa).

Active-site residues include His-304 and Asp-363.

The protein belongs to the citrate synthase family.

The enzyme catalyses oxaloacetate + acetyl-CoA + H2O = citrate + CoA + H(+). Its pathway is carbohydrate metabolism; tricarboxylic acid cycle; isocitrate from oxaloacetate: step 1/2. The protein is Citrate synthase (gltA) of Rickettsia canadensis.